A 122-amino-acid chain; its full sequence is Large ribosomal subunit protein uL14 (122 aa).

Belongs to the universal ribosomal protein uL14 family. As to quaternary structure, part of the 50S ribosomal subunit. Forms a cluster with proteins L3 and L19. In the 70S ribosome, L14 and L19 interact and together make contacts with the 16S rRNA in bridges B5 and B8.

Binds to 23S rRNA. Forms part of two intersubunit bridges in the 70S ribosome. The protein is Large ribosomal subunit protein uL14 of Bartonella bacilliformis (strain ATCC 35685 / KC583 / Herrer 020/F12,63).